We begin with the raw amino-acid sequence, 449 residues long: Maltoporin (449 aa).

The signal sequence occupies residues 1–24 (MITLRKLPLAVAVAAGVMSAQAMA).

Belongs to the porin LamB (TC 1.B.3) family. In terms of assembly, homotrimer formed of three 18-stranded antiparallel beta-barrels, containing three independent channels.

It is found in the cell outer membrane. It carries out the reaction beta-maltose(in) = beta-maltose(out). Its function is as follows. Involved in the transport of maltose and maltodextrins. This is Maltoporin from Citrobacter koseri (strain ATCC BAA-895 / CDC 4225-83 / SGSC4696).